We begin with the raw amino-acid sequence, 201 residues long: Large ribosomal subunit protein bL25 (201 aa).

The protein belongs to the bacterial ribosomal protein bL25 family. CTC subfamily. Part of the 50S ribosomal subunit; part of the 5S rRNA/L5/L18/L25 subcomplex. Contacts the 5S rRNA. Binds to the 5S rRNA independently of L5 and L18.

This is one of the proteins that binds to the 5S RNA in the ribosome where it forms part of the central protuberance. The polypeptide is Large ribosomal subunit protein bL25 (Burkholderia cenocepacia (strain HI2424)).